The sequence spans 397 residues: Elongation factor Tu (397 aa).

A tr-type G domain is found at 10–206 (KPHVNIGTIG…AVDDNVPEPE (197 aa)). The tract at residues 19–26 (GHVDHGKT) is G1. 19–26 (GHVDHGKT) is a GTP binding site. T26 contributes to the Mg(2+) binding site. The G2 stretch occupies residues 62-66 (GITIN). Positions 83 to 86 (DAPG) are G3. Residues 83–87 (DAPGH) and 138–141 (NKSD) each bind GTP. The tract at residues 138 to 141 (NKSD) is G4. The segment at 176 to 178 (SAL) is G5.

The protein belongs to the TRAFAC class translation factor GTPase superfamily. Classic translation factor GTPase family. EF-Tu/EF-1A subfamily. Monomer.

The protein resides in the cytoplasm. The enzyme catalyses GTP + H2O = GDP + phosphate + H(+). Functionally, GTP hydrolase that promotes the GTP-dependent binding of aminoacyl-tRNA to the A-site of ribosomes during protein biosynthesis. The chain is Elongation factor Tu from Brevibacterium linens.